Here is a 310-residue protein sequence, read N- to C-terminus: Protein-L-isoaspartate O-methyltransferase (310 aa).

Disordered regions lie at residues 1-42 (MSGE…AADK) and 64-90 (SAAAKPATAPKPTALKPAMPKPAAPSV). The span at 14-32 (EDLKRAPRKSEGRAGERHA) shows a compositional bias: basic and acidic residues. The segment covering 64 to 81 (SAAAKPATAPKPTALKPA) has biased composition (low complexity). Residue S157 is part of the active site.

This sequence belongs to the methyltransferase superfamily. L-isoaspartyl/D-aspartyl protein methyltransferase family.

It localises to the cytoplasm. It catalyses the reaction [protein]-L-isoaspartate + S-adenosyl-L-methionine = [protein]-L-isoaspartate alpha-methyl ester + S-adenosyl-L-homocysteine. In terms of biological role, catalyzes the methyl esterification of L-isoaspartyl residues in peptides and proteins that result from spontaneous decomposition of normal L-aspartyl and L-asparaginyl residues. It plays a role in the repair and/or degradation of damaged proteins. This Burkholderia lata (strain ATCC 17760 / DSM 23089 / LMG 22485 / NCIMB 9086 / R18194 / 383) protein is Protein-L-isoaspartate O-methyltransferase.